We begin with the raw amino-acid sequence, 114 residues long: MQQAKAIARYVRISPRKVRQVVDLIRGKNVSDALAILQFTPKGATEPVTKVLNSAVANAEHNYDMDTDALIVKEIYVDEGPTLKRIKPRAMGRADQIRKRTSHITVVVVEKKEG.

This sequence belongs to the universal ribosomal protein uL22 family. Part of the 50S ribosomal subunit.

Its function is as follows. This protein binds specifically to 23S rRNA; its binding is stimulated by other ribosomal proteins, e.g. L4, L17, and L20. It is important during the early stages of 50S assembly. It makes multiple contacts with different domains of the 23S rRNA in the assembled 50S subunit and ribosome. Functionally, the globular domain of the protein is located near the polypeptide exit tunnel on the outside of the subunit, while an extended beta-hairpin is found that lines the wall of the exit tunnel in the center of the 70S ribosome. In Desulfitobacterium hafniense (strain DSM 10664 / DCB-2), this protein is Large ribosomal subunit protein uL22.